The following is a 664-amino-acid chain: DNA mismatch repair protein MutL (664 aa).

The segment at 382 to 447 (RKAGQEQQLQ…YGEPAPSKQQ (66 aa)) is disordered. Over residues 427-436 (RHTTSSNQSE) the composition is skewed to polar residues.

It belongs to the DNA mismatch repair MutL/HexB family.

Functionally, this protein is involved in the repair of mismatches in DNA. It is required for dam-dependent methyl-directed DNA mismatch repair. May act as a 'molecular matchmaker', a protein that promotes the formation of a stable complex between two or more DNA-binding proteins in an ATP-dependent manner without itself being part of a final effector complex. The chain is DNA mismatch repair protein MutL from Vibrio vulnificus (strain CMCP6).